A 135-amino-acid chain; its full sequence is ATP synthase epsilon chain (135 aa).

The protein belongs to the ATPase epsilon chain family. In terms of assembly, F-type ATPases have 2 components, CF(1) - the catalytic core - and CF(0) - the membrane proton channel. CF(1) has five subunits: alpha(3), beta(3), gamma(1), delta(1), epsilon(1). CF(0) has three main subunits: a, b and c.

It localises to the cell inner membrane. Its function is as follows. Produces ATP from ADP in the presence of a proton gradient across the membrane. This chain is ATP synthase epsilon chain, found in Rhodopseudomonas palustris (strain ATCC BAA-98 / CGA009).